A 207-amino-acid chain; its full sequence is Outer-membrane lipoprotein LolB (207 aa).

Positions 1 to 23 (MPTMNRSRRLALLCLGAPLLLAA) are cleaved as a signal peptide. Residue cysteine 24 is the site of N-palmitoyl cysteine attachment. Cysteine 24 carries the S-diacylglycerol cysteine lipid modification. The disordered stretch occupies residues 171 to 207 (PSASQAPAPRPRRIDLEREGGPTPLAVKLVIDPEEAP).

Belongs to the LolB family. In terms of assembly, monomer.

Its subcellular location is the cell outer membrane. Plays a critical role in the incorporation of lipoproteins in the outer membrane after they are released by the LolA protein. The sequence is that of Outer-membrane lipoprotein LolB from Cupriavidus pinatubonensis (strain JMP 134 / LMG 1197) (Cupriavidus necator (strain JMP 134)).